We begin with the raw amino-acid sequence, 339 residues long: Olfactory receptor 7E24 (339 aa).

At 1 to 43 (MSYFPILFFFFLKRCPSYTEPQNLTGVSEFLLLGLSEDPELQP) the chain is on the extracellular side. Residue N23 is glycosylated (N-linked (GlcNAc...) asparagine). A helical transmembrane segment spans residues 44-64 (VLAGLFLSMYLVTVLGNLLII). Topologically, residues 65–72 (LAVSSDSH) are cytoplasmic. Residues 73–93 (LHTPMYFFLSNLSLADIGFTS) form a helical membrane-spanning segment. At 94-117 (TTVPKMIVDMQTHSRVISYEGCLT) the chain is on the extracellular side. An intrachain disulfide couples C115 to C207. Residues 118–138 (QMSFFVLFACMDDMLLSVMAY) traverse the membrane as a helical segment. Residues 139–157 (DRFVAICHPLHYRIIMNPR) lie on the Cytoplasmic side of the membrane. The helical transmembrane segment at 158-178 (LCGFLILLSFFISLLDSQLHN) threads the bilayer. At 179–215 (LIMLQLTCFKDVDISNFFCDPSQLLHLRCSDTFINEM) the chain is on the extracellular side. The helical transmembrane segment at 216-235 (VIYFMGAIFGCLPISGILFS) threads the bilayer. Residues 236 to 255 (YYKIVSPILRVPTSDGKYKA) lie on the Cytoplasmic side of the membrane. Residues 256-276 (FSTCGSHLAVVCLFYGTGLVG) traverse the membrane as a helical segment. Residues 277-289 (YLSSAVLPSPRKS) are Extracellular-facing. A helical membrane pass occupies residues 290–310 (MVASVMYTVVTPMLNPFIYSL). The Cytoplasmic portion of the chain corresponds to 311 to 339 (RNKDIQSALCRLHGRIIKSHHLHPFCYMG).

It belongs to the G-protein coupled receptor 1 family.

It localises to the cell membrane. Functionally, odorant receptor. The chain is Olfactory receptor 7E24 (OR7E24) from Homo sapiens (Human).